Here is a 54-residue protein sequence, read N- to C-terminus: Kazal-type inhibitor-like protein (54 aa).

Residues 1–54 form the Kazal-like domain; the sequence is MKVNCKGYPTKFCFGKPLPHCASDGKTYPNRCRFCNAFVKSHGLITLRYYGKCK. 3 disulfides stabilise this stretch: Cys5–Cys35, Cys13–Cys32, and Cys21–Cys53.

May form disulfide-linked dimers or trimers (in vitro). Expressed by the venom gland.

Its subcellular location is the secreted. In terms of biological role, partially inhibits trypsin in vitro at slightly acidic pH and concentrations in excess of 0.3 mM. Has no protease inhibitory activity at neutral or basic pH. Has no antibacterial activity. Shows no toxicity in vertebrates apart from transient paw edema in mouse. The protein is Kazal-type inhibitor-like protein of Bothriechis schlegelii (Eyelash palm pitviper).